The sequence spans 358 residues: Biotin synthase (358 aa).

One can recognise a Radical SAM core domain in the interval 44–272 (NRVRLNYLVN…DSEVRAAAGR (229 aa)). [4Fe-4S] cluster contacts are provided by Cys-59, Cys-63, and Cys-66. The [2Fe-2S] cluster site is built by Cys-103, Cys-136, Cys-196, and Arg-267.

It belongs to the radical SAM superfamily. Biotin synthase family. In terms of assembly, homodimer. [4Fe-4S] cluster is required as a cofactor. The cofactor is [2Fe-2S] cluster.

The enzyme catalyses (4R,5S)-dethiobiotin + (sulfur carrier)-SH + 2 reduced [2Fe-2S]-[ferredoxin] + 2 S-adenosyl-L-methionine = (sulfur carrier)-H + biotin + 2 5'-deoxyadenosine + 2 L-methionine + 2 oxidized [2Fe-2S]-[ferredoxin]. It participates in cofactor biosynthesis; biotin biosynthesis; biotin from 7,8-diaminononanoate: step 2/2. Its function is as follows. Catalyzes the conversion of dethiobiotin (DTB) to biotin by the insertion of a sulfur atom into dethiobiotin via a radical-based mechanism. This is Biotin synthase from Cutibacterium acnes (strain DSM 16379 / KPA171202) (Propionibacterium acnes).